A 353-amino-acid chain; its full sequence is WD repeat-containing protein 55 (353 aa).

WD repeat units follow at residues 4–43 (DLGA…SLVR), 49–88 (AHKE…QVAH), 92–130 (AHED…CSHE), 133–172 (AHED…VQSQ), 175–214 (FSED…DCSD), 218–257 (DLAP…IIQP), and 260–299 (SHDY…EGSN). Positions 300–353 (VNSGNASGAAEDSDSDNDGMDLDNDPSKSSKGSKRKTKSKANTLNATNNFFADL) are disordered. Positions 310 to 323 (EDSDSDNDGMDLDN) are enriched in acidic residues. A compositionally biased stretch (low complexity) spans 339 to 353 (KANTLNATNNFFADL).

It belongs to the WD repeat WDR55 family. In terms of assembly, interacts with DDB1A. In terms of tissue distribution, highly expressed in roots. Expressed in cotyledons, leaves, buds and flowers.

It localises to the nucleus. It is found in the cytoplasm. In terms of biological role, required for male and female gametogenesis, seed development, and embryo and endosperm development at early stages. Involved in the establishment of bilateral symmetry in the transition from the globular to the heart embryo stage. May act in the frame of a CRL4 complex. Required for proper vegetative growth and organization of the adult plant body. May play a role in hormonal control of plant development. This Arabidopsis thaliana (Mouse-ear cress) protein is WD repeat-containing protein 55.